We begin with the raw amino-acid sequence, 304 residues long: Ribosomal protein L11 methyltransferase (304 aa).

Positions 147, 168, 190, and 238 each coordinate S-adenosyl-L-methionine.

Belongs to the methyltransferase superfamily. PrmA family.

It localises to the cytoplasm. The catalysed reaction is L-lysyl-[protein] + 3 S-adenosyl-L-methionine = N(6),N(6),N(6)-trimethyl-L-lysyl-[protein] + 3 S-adenosyl-L-homocysteine + 3 H(+). Its function is as follows. Methylates ribosomal protein L11. This is Ribosomal protein L11 methyltransferase from Prochlorococcus marinus (strain SARG / CCMP1375 / SS120).